Reading from the N-terminus, the 308-residue chain is Protein translocase subunit SecF (308 aa).

A run of 6 helical transmembrane segments spans residues 18–38 (AYVF…TRGL), 134–154 (GAIY…LIRF), 160–180 (LGAV…FSLL), 193–213 (TIIA…VVVF), 244–264 (IITS…GGEV), and 272–292 (LIVG…PVVI).

It belongs to the SecD/SecF family. SecF subfamily. Forms a complex with SecD. Part of the essential Sec protein translocation apparatus which comprises SecA, SecYEG and auxiliary proteins SecDF. Other proteins may also be involved.

The protein localises to the cell inner membrane. Part of the Sec protein translocase complex. Interacts with the SecYEG preprotein conducting channel. SecDF uses the proton motive force (PMF) to complete protein translocation after the ATP-dependent function of SecA. The polypeptide is Protein translocase subunit SecF (Rhodothermus marinus (strain ATCC 43812 / DSM 4252 / R-10) (Rhodothermus obamensis)).